A 231-amino-acid polypeptide reads, in one-letter code: Protein C activator (231 aa).

Residues 1–222 (VIGGDECNIN…YTDWIQSIIS (222 aa)) enclose the Peptidase S1 domain. 6 disulfides stabilise this stretch: Cys-7–Cys-138, Cys-25–Cys-41, Cys-73–Cys-229, Cys-117–Cys-183, Cys-149–Cys-162, and Cys-173–Cys-198. N-linked (GlcNAc...) asparagine glycosylation occurs at Asn-21. His-40 (charge relay system) is an active-site residue. Asn-78 is a glycosylation site (N-linked (GlcNAc...) asparagine). Residue Asp-85 is the Charge relay system of the active site. Asn-129 carries an N-linked (GlcNAc...) asparagine glycan. Residue Ser-177 is the Charge relay system of the active site.

The protein belongs to the peptidase S1 family. Snake venom subfamily. Monomer. In terms of tissue distribution, expressed by the venom gland.

Its subcellular location is the secreted. Functionally, snake venom serine protease that selectively cleaves the heavy chain of protein C (PROC). This activation is thrombomodulin-independent. The protein is Protein C activator of Agkistrodon contortrix contortrix (Southern copperhead).